The sequence spans 210 residues: Thymidylate kinase (210 aa).

ATP is bound at residue glycine 10–serine 17.

Belongs to the thymidylate kinase family.

It catalyses the reaction dTMP + ATP = dTDP + ADP. In terms of biological role, phosphorylation of dTMP to form dTDP in both de novo and salvage pathways of dTTP synthesis. The protein is Thymidylate kinase of Pseudomonas aeruginosa (strain UCBPP-PA14).